A 101-amino-acid chain; its full sequence is UPF0134 protein MPN_675 (101 aa).

Belongs to the UPF0134 family.

This is UPF0134 protein MPN_675 from Mycoplasma pneumoniae (strain ATCC 29342 / M129 / Subtype 1) (Mycoplasmoides pneumoniae).